A 367-amino-acid polypeptide reads, in one-letter code: E3 ubiquitin-protein ligase RGLG3 (367 aa).

One can recognise a VWFA domain in the interval 37-257; the sequence is NLILGIDFTK…KEAAFALAAL (221 aa). An RING-type zinc finger spans residues 323-356; it reads CPICLTNPKDMAFSCGHTTCKECGVVITTCPLCR.

In terms of assembly, interacts with UBC30, GRXS17 and GLB3. Binds to and coactivates GAF1/IDD2 and ENY/IDD1. As to expression, widely expressed.

It localises to the cytoplasm. The protein resides in the nucleus. It carries out the reaction S-ubiquitinyl-[E2 ubiquitin-conjugating enzyme]-L-cysteine + [acceptor protein]-L-lysine = [E2 ubiquitin-conjugating enzyme]-L-cysteine + N(6)-ubiquitinyl-[acceptor protein]-L-lysine.. Functionally, possesses E3 ubiquitin-protein ligase in vitro. Acts as upstream modulator of jasmonate (JA) signaling in response to various stimuli, such as JA-inhibited root growth, JA-inductive gene expression, coronatine-mediated pathogen susceptibility, wound-stimulated expression of JA-responsive genes and wound-induced JA biosynthesis. Controls fumonisin B1 (FB1)-triggered programmed cell death (PCD) by modulating the JA signaling pathway. May mediate salicylic acid (SA) suppression of JA signaling in FB1-induced responses. May mediate the formation of 'Lys-48'-linked multiubiquitin chains. Mediates the polyubiquitination and subsequent proteasomal degradation of the target protein GRXS17. In Arabidopsis thaliana (Mouse-ear cress), this protein is E3 ubiquitin-protein ligase RGLG3.